Reading from the N-terminus, the 468-residue chain is ATP synthase subunit beta (468 aa).

An ATP-binding site is contributed by 148 to 155 (GGAGVGKT).

The protein belongs to the ATPase alpha/beta chains family. F-type ATPases have 2 components, CF(1) - the catalytic core - and CF(0) - the membrane proton channel. CF(1) has five subunits: alpha(3), beta(3), gamma(1), delta(1), epsilon(1). CF(0) has three main subunits: a(1), b(2) and c(9-12). The alpha and beta chains form an alternating ring which encloses part of the gamma chain. CF(1) is attached to CF(0) by a central stalk formed by the gamma and epsilon chains, while a peripheral stalk is formed by the delta and b chains.

The protein localises to the cell inner membrane. It catalyses the reaction ATP + H2O + 4 H(+)(in) = ADP + phosphate + 5 H(+)(out). Produces ATP from ADP in the presence of a proton gradient across the membrane. The catalytic sites are hosted primarily by the beta subunits. This is ATP synthase subunit beta from Xanthomonas campestris pv. campestris (strain B100).